Reading from the N-terminus, the 711-residue chain is Hydroperoxide isomerase ALOXE3 (711 aa).

In terms of domain architecture, PLAT spans 2 to 119 (AVYRLCVTTG…TVELRPGTAR (118 aa)). The region spanning 120-711 (TICQDSLPLL…PPLIENSVSI (592 aa)) is the Lipoxygenase domain. Histidine 408, histidine 413, histidine 588, asparagine 592, and isoleucine 711 together coordinate Fe cation.

Belongs to the lipoxygenase family. It depends on Fe cation as a cofactor. In terms of tissue distribution, skin specific.

The protein localises to the cytoplasm. It catalyses the reaction a hydroperoxyeicosatetraenoate = a hydroxy-epoxy-eicosatetraenoate. The catalysed reaction is (8S)-hydroperoxy-(5Z,9E,11Z,14Z)-eicosatetraenoate = (10R)-hydroxy-(8S,9S)-epoxy-(5Z,11Z,14Z)-eicosatrienoate. The enzyme catalyses (12R)-hydroperoxy-(5Z,8Z,10E,14Z)-eicosatetraenoate = (8R)-hydroxy-(11R,12R)-epoxy-(5Z,9E,14Z)-eicosatrienoate. It carries out the reaction (12S)-hydroperoxy-(5Z,8Z,10E,14Z)-eicosatetraenoate = (8R)-hydroxy-(11S,12S)-epoxy-(5Z,9E,14Z)-eicosatrienoate. It catalyses the reaction (12S)-hydroperoxy-(5Z,8Z,10E,14Z)-eicosatetraenoate = (10R)-hydroxy-(11S,12S)-epoxy-(5Z,8Z,14Z)-eicosatrienoate. The catalysed reaction is (15S)-hydroperoxy-(5Z,8Z,11Z,13E)-eicosatetraenoate = (13R)-hydroxy-(14S,15S)-epoxy-(5Z,8Z,11Z)-eicosatrienoate. The enzyme catalyses (13S)-hydroperoxy-(9Z,11E)-octadecadienoate = 11-hydroxy-(12S,13S)-epoxy-(9Z)-octadecenoate. It carries out the reaction (5S)-hydroperoxy-(6E,8Z,11Z,14Z)-eicosatetraenoate = 7R-hydroxy-5S,6S-epoxy-(8Z,11Z,14Z)-eicosatrienoate. It catalyses the reaction N-[omega-(9R)-hydroperoxy-(10E,12Z)-octadecadienoyloxy]acyl-beta-D-glucosyl-(1&lt;-&gt;1)-octadecasphing-4E-enine = a N-[omega-(9R,10R)-epoxy-(13R)-hydroxy-(11E)-octadecenoyloxy]acyl-beta-D-glucosyl-(1&lt;-&gt;1)-sphing-4E-enine. The catalysed reaction is a N-[omega-(9R)-hydroperoxy-(10E,12Z)-octadecadienoyloxy]-acylsphin-4E-enine = a N-[omega-(9R,10R)-epoxy-(13R)-hydroxy-(11E)-octadecenoyloxy]-acylsphing-4E-enine. The enzyme catalyses a hydroperoxyeicosatetraenoate = an oxoeicosatetraenoate + H2O. It carries out the reaction (8R)-hydroperoxy-(5Z,9E,11Z,14Z)-eicosatetraenoate = 8-oxo-(5Z,9E,11Z,14Z)-eicosatetraenoate + H2O. It catalyses the reaction (8S)-hydroperoxy-(5Z,9E,11Z,14Z)-eicosatetraenoate = 8-oxo-(5Z,9E,11Z,14Z)-eicosatetraenoate + H2O. The catalysed reaction is (12R)-hydroperoxy-(5Z,8Z,10E,14Z)-eicosatetraenoate = 12-oxo-(5Z,8Z,10E,14Z)-eicosatetraenoate + H2O. The enzyme catalyses (12S)-hydroperoxy-(5Z,8Z,10E,14Z)-eicosatetraenoate = 12-oxo-(5Z,8Z,10E,14Z)-eicosatetraenoate + H2O. It carries out the reaction (15S)-hydroperoxy-(5Z,8Z,11Z,13E)-eicosatetraenoate = 15-oxo-(5Z,8Z,11Z,13E)-eicosatetraenoate + H2O. It catalyses the reaction (13S)-hydroperoxy-(9Z,11E)-octadecadienoate = 13-oxo-(9Z,11E)-octadecadienoate + H2O. The protein operates within lipid metabolism; hydroperoxy eicosatetraenoic acid biosynthesis. It functions in the pathway lipid metabolism; sphingolipid metabolism. In terms of biological role, non-heme iron-containing lipoxygenase which is atypical in that it displays a prominent hydroperoxide isomerase activity and a reduced lipoxygenases activity. The hydroperoxide isomerase activity catalyzes the isomerization of hydroperoxides, derived from arachidonic and linoleic acid by ALOX12B, into hepoxilin-type epoxyalcohols and ketones. In presence of oxygen, oxygenates polyunsaturated fatty acids, including arachidonic acid, to produce fatty acid hydroperoxides. In the skin, acts downstream of ALOX12B on the linoleate moiety of esterified omega-hydroxyacyl-sphingosine (EOS) ceramides to produce an epoxy-ketone derivative, a crucial step in the conjugation of omega-hydroxyceramide to membrane proteins. Therefore plays a crucial role in the synthesis of corneocytes lipid envelope and the establishment of the skin barrier to water loss. In parallel, it may have a signaling function in barrier formation through the production of hepoxilins metabolites. Also plays a role in adipocyte differentiation through hepoxilin A3 and hepoxilin B3 production which in turn activate PPARG. Through the production of hepoxilins in the spinal cord, it may regulate inflammatory tactile allodynia. This chain is Hydroperoxide isomerase ALOXE3, found in Mus musculus (Mouse).